A 216-amino-acid chain; its full sequence is Pyrophosphatase PpaX (216 aa).

Aspartate 9 serves as the catalytic Nucleophile.

The protein belongs to the HAD-like hydrolase superfamily. PpaX family. Mg(2+) is required as a cofactor.

It carries out the reaction diphosphate + H2O = 2 phosphate + H(+). Hydrolyzes pyrophosphate formed during P-Ser-HPr dephosphorylation by HPrK/P. Might play a role in controlling the intracellular pyrophosphate pool. The chain is Pyrophosphatase PpaX from Bacillus anthracis (strain CDC 684 / NRRL 3495).